Here is a 150-residue protein sequence, read N- to C-terminus: Large ribosomal subunit protein uL23m (150 aa).

Belongs to the universal ribosomal protein uL23 family. As to quaternary structure, component of the mitochondrial ribosome large subunit (39S) which comprises a 16S rRNA and about 50 distinct proteins.

It localises to the mitochondrion. The protein is Large ribosomal subunit protein uL23m (mRpL23) of Drosophila melanogaster (Fruit fly).